Consider the following 95-residue polypeptide: Acylphosphatase (95 aa).

Residues 10 to 95 (CIHVTVSGKV…VEDYSDFRVR (86 aa)) enclose the Acylphosphatase-like domain. Residues R25 and N43 contribute to the active site.

The protein belongs to the acylphosphatase family.

It catalyses the reaction an acyl phosphate + H2O = a carboxylate + phosphate + H(+). The sequence is that of Acylphosphatase (acyP) from Coxiella burnetii (strain RSA 493 / Nine Mile phase I).